A 382-amino-acid chain; its full sequence is Phenylalanine dehydrogenase (382 aa).

Residue R54 coordinates NAD(+). Residue K78 participates in L-phenylalanine binding. Catalysis depends on K90, which acts as the Proton donor/acceptor. NAD(+) is bound by residues D125, S156, T160, 190-196 (GLGKVGY), 213-214 (DI), 253-254 (AF), and 274-276 (SAN). N276 serves as a coordination point for L-phenylalanine.

Belongs to the Glu/Leu/Phe/Val dehydrogenases family.

The catalysed reaction is L-phenylalanine + NAD(+) + H2O = 3-phenylpyruvate + NH4(+) + NADH + H(+). Activity is not affected by the metal chelating agent EDTA. Addition of 1 mM Mg(2+) results in 15% increase in activity, while the enzyme is strongly inhibited by 1 mM Fe(3+), Fe(2+), Cu(2+), Zn(2+) and Ag(+). Catalyzes the reversible NAD(+)-dependent oxidative deamination of L-phenylalanine to phenylpyruvate. Can also catalyze the oxidative deamination of several other amino acids, with much lower efficiency. Shows activity towards various bulky aromatic alpha-keto acids/esters and (S)-amine alcohols. Can catalyze the amination of 3-(2-chlorophenyl)-2-oxopropionic acid (CPOA) to produce 2-chloro-L-phenylalanine (2-Cl-Phe), a chemical compound used in the pharmaceutical and biotechnology industries. Shows a preference for amination over deamination. In Bacillus thermotolerans (Quasibacillus thermotolerans), this protein is Phenylalanine dehydrogenase.